The chain runs to 452 residues: Transcription factor AP-2-delta (452 aa).

At serine 239 the chain carries Phosphoserine; by PKA. The segment at 280 to 410 is H-S-H (helix-span-helix), dimerization; that stretch reads RRKAANVTLL…VLSEMLNYLE (131 aa). Residues 416 to 452 form a disordered region; that stretch reads KNGGAADSGQGHANSEKAPLRKASEAAVKEGKTEKTD. The span at 429-452 shows a compositional bias: basic and acidic residues; sequence NSEKAPLRKASEAAVKEGKTEKTD.

The protein belongs to the AP-2 family. As to quaternary structure, binds DNA as a dimer. Can form homodimers or heterodimers with other AP-2 family members. In terms of tissue distribution, expressed in both embryonic and newborn brain.

The protein localises to the nucleus. Its function is as follows. Sequence-specific DNA-binding protein that interacts with inducible viral and cellular enhancer elements to regulate transcription of selected genes. AP-2 factors bind to the consensus sequence 5'-GCCNNNGGC-3' and activate genes involved in a large spectrum of important biological functions including proper eye, face, body wall, limb and neural tube development. They also suppress a number of genes including MCAM/MUC18, C/EBP alpha and MYC. This chain is Transcription factor AP-2-delta (Tfap2d), found in Mus musculus (Mouse).